Here is a 109-residue protein sequence, read N- to C-terminus: Large ribosomal subunit protein uL22 (109 aa).

The span at 84–95 shows a compositional bias: basic residues; sequence ARGTASRIRKPT. A disordered region spans residues 84-109; that stretch reads ARGTASRIRKPTSHIMVEVSKPSKEA.

The protein belongs to the universal ribosomal protein uL22 family. As to quaternary structure, part of the 50S ribosomal subunit.

This protein binds specifically to 23S rRNA; its binding is stimulated by other ribosomal proteins, e.g. L4, L17, and L20. It is important during the early stages of 50S assembly. It makes multiple contacts with different domains of the 23S rRNA in the assembled 50S subunit and ribosome. Its function is as follows. The globular domain of the protein is located near the polypeptide exit tunnel on the outside of the subunit, while an extended beta-hairpin is found that lines the wall of the exit tunnel in the center of the 70S ribosome. This Campylobacter hominis (strain ATCC BAA-381 / DSM 21671 / CCUG 45161 / LMG 19568 / NCTC 13146 / CH001A) protein is Large ribosomal subunit protein uL22.